The sequence spans 22 residues: Mu-conotoxin MIIIA (22 aa).

Gln1 bears the Pyrrolidone carboxylic acid mark. Cystine bridges form between Cys3-Cys15, Cys4-Cys21, and Cys10-Cys22. The residue at position 22 (Cys22) is a Cysteine amide.

Belongs to the conotoxin M superfamily. In terms of tissue distribution, expressed by the venom duct.

The protein resides in the secreted. Functionally, mu-conotoxins block voltage-gated sodium channels (Nav). This synthetic toxin potently blocks rNav1.3/SCN3A. It also moderately blocks rNav1.1/SCN1A, rNav1.2/SCN2A, rNav1.4/SCN4A, mNav1.6/SCN8A, and Nav1.7/SCN9A. sodium channels. This block is very slowly reversible. The sequence is that of Mu-conotoxin MIIIA from Conus magus (Magical cone).